The following is a 732-amino-acid chain: MKSVKIMGTMPPSISLAKAHERISQHWQNPVGELNIGGKRYRIIDNQVLRLNPHSGFSLFREGVGKIFSGKMFNFSIARNLTDTLHAAQKTTSQELRSDIPNALSNLFGAKPQTELPLGWKGEPLSGAPDLEGMRVAETDKFAEGESHISIIETKDKQRLVAKIERSIAEGHLFAELEAYKHIYKTAGKHPNLANVHGMAVVPYGNRKEEALLMDEVDGWRCSDTLRTLADSWKQGKINSEAYWGTIKFIAHRLLDVTNHLAKAGVVHNDIKPGNVVFDRASGEPVVIDLGLHSRSGEQPKGFTESFKAPELGVGNLGASEKSDVFLVVSTLLHCIEGFEKNPEIKPNQGLRFITSEPAHVMDENGYPIHRPGIAGVETAYTRFITDILGVSADSRPDSNEARLHEFLSDGTIDEESAKQILKDTLTGEMSPLSTDVRRITPKKLRELSDLLRTHLSSAATKQLDMGGVLSDLDTMLVALDKAEREGGVDKDQLKSFNSLILKTYRVIEDYVKGREGDTKNSSTEVSPYHRSNFMLSIVEPSLQRIQKHLDQTHSFSDIGSLVRAHKHLETLLEVLVTLSQQGQPVSSETYGFLNRLAEAKITLSQQLNTLQQQQESAKAQLSILINRSGSWADVARQSLQRFDSTRPVVKFGTEQYTAIHRQMMAAHAAITLQEVSEFTDDMRNFTVDSIPLLIQLGRSSLMDEHLVEQREKLRELTTIAERLNRLEREWM.

In terms of domain architecture, Protein kinase spans 136-408 (VAETDKFAEG…SNEARLHEFL (273 aa)). ATP is bound by residues 142 to 150 (FAEGESHIS) and Lys-163. Asp-270 serves as the catalytic Proton acceptor.

It belongs to the protein kinase superfamily. Ser/Thr protein kinase family.

The protein localises to the secreted. It catalyses the reaction L-seryl-[protein] + ATP = O-phospho-L-seryl-[protein] + ADP + H(+). The enzyme catalyses L-threonyl-[protein] + ATP = O-phospho-L-threonyl-[protein] + ADP + H(+). Its function is as follows. Acts as a virulence determinant. The sequence is that of Protein kinase YpkA (ypkA) from Yersinia pseudotuberculosis serotype I (strain IP32953).